Consider the following 604-residue polypeptide: MQFLLWSTGLVALLSWLIYTQETQSASCRCRPWESCWPSEELWNSFNTSVDGKLHRLRPAAHVCYGPSFNRSACDNILLLSRDSGWRASNPGVLQDWVWEAGETANESCPVGSLRTASAVNSCHQGRIPLFTVGVESTKQVQEAVRFARKHKLRLVIRNTGHDLAGRSSAPDSFQIHTHRLQEIQFHADMRLDGSNTSLGPAVTVGAGVMMGDLYAQAARHGYMVLGGDCPTVGVVGGFLQGGGISDFLSLNQGFGVDNVLEYEVVTADGELVVANALQNQDLFWALRGGGGGTFGVVTRATMRVFPDVPVVISEILLEAPQAISSSWTQGLSIVLTALQSLNHDNVGGQLVIAVLPNLAVQASIKFFFLDATEAAVIDRRMKPFLTKLSRANVKYTYSSKNLPHFSSNYRQVPDIHSDNDYGVLGSTVAISQQLFDSPQGPEKVAKALANLPVSAGDLIFTSNLGGRVIRNGELAETSMHPAWRSASQLINYVHTVEPSIEGRAKARERLTNTQMPMLYALDPNIKLSYRNVGDPNEKDFQQIYWGPNYGRLSNIKKKWDTDDLFFSKLGVGSERWDSEESDEVYFFSYFYLEGINTLKVARR.

Residues 1–25 (MQFLLWSTGLVALLSWLIYTQETQS) form the signal peptide. 4 N-linked (GlcNAc...) asparagine glycosylation sites follow: Asn-47, Asn-70, Asn-106, and Asn-196. The region spanning 125 to 308 (QGRIPLFTVG…TRATMRVFPD (184 aa)) is the FAD-binding PCMH-type domain.

Belongs to the oxygen-dependent FAD-linked oxidoreductase family. Requires FAD as cofactor.

It functions in the pathway alkaloid biosynthesis; ergot alkaloid biosynthesis. In terms of biological role, FAD-linked oxidoreductase; part of the gene cluster that mediates the biosynthesis of fungal ergot alkaloid. DmaW catalyzes the first step of ergot alkaloid biosynthesis by condensing dimethylallyl diphosphate (DMAP) and tryptophan to form 4-dimethylallyl-L-tryptophan. The second step is catalyzed by the methyltransferase easF that methylates 4-dimethylallyl-L-tryptophan in the presence of S-adenosyl-L-methionine, resulting in the formation of 4-dimethylallyl-L-abrine. The catalase easC and the FAD-dependent oxidoreductase easE then transform 4-dimethylallyl-L-abrine to chanoclavine-I which is further oxidized by easD in the presence of NAD(+), resulting in the formation of chanoclavine-I aldehyde. Chanoclavine-I aldehyde is the precursor of ergoamides and ergopeptines in Clavicipitaceae, and clavine-type alcaloids such as fumiclavine in Trichocomaceae. However, the metabolites downstream of chanoclavine-I aldehyde in Arthrodermataceae have not been identified yet. The sequence is that of FAD-linked oxidoreductase easE from Trichophyton verrucosum (strain HKI 0517).